A 186-amino-acid chain; its full sequence is Probable RNA 2'-phosphotransferase (186 aa).

The protein belongs to the KptA/TPT1 family.

In terms of biological role, removes the 2'-phosphate from RNA via an intermediate in which the phosphate is ADP-ribosylated by NAD followed by a presumed transesterification to release the RNA and generate ADP-ribose 1''-2''-cyclic phosphate (APPR&gt;P). May function as an ADP-ribosylase. This is Probable RNA 2'-phosphotransferase from Pectobacterium carotovorum subsp. carotovorum (strain PC1).